We begin with the raw amino-acid sequence, 195 residues long: MTPQLILASTSVFRQALLQKLGLAFGSCNPDIDESPMTNESAQDLVLRLAKAKTKAGATHFPHGLIIGSDQVAVIDGKIIGKPLNRENAIKQLSQASGKVITFYTGLALYHAETGEMNAQVEPFTVHFRQLSAAQIAAYVDKEQPFYCAGSFKSEGLGIALFNRLEGRDPNTLIGLPLILLTEMLLNQGIDVLAD.

Catalysis depends on Asp70, which acts as the Proton acceptor.

The protein belongs to the Maf family. YceF subfamily. Requires a divalent metal cation as cofactor.

It localises to the cytoplasm. It catalyses the reaction N(7)-methyl-GTP + H2O = N(7)-methyl-GMP + diphosphate + H(+). Functionally, nucleoside triphosphate pyrophosphatase that hydrolyzes 7-methyl-GTP (m(7)GTP). May have a dual role in cell division arrest and in preventing the incorporation of modified nucleotides into cellular nucleic acids. The polypeptide is 7-methyl-GTP pyrophosphatase (Shewanella sp. (strain MR-7)).